The chain runs to 482 residues: Matrix metalloproteinase-20 (482 aa).

The signal sequence occupies residues 1-21 (MKVLPASGLAVLVTALKFATA). Residues 22-106 (DPNLLAATPR…PRCGVPDVAN (85 aa)) constitute a propeptide that is removed on maturation. A Cysteine switch motif is present at residues 97 to 104 (PRCGVPDV). Zn(2+) is bound at residue C99. E163, A164, and D165 together coordinate Ca(2+). Residues H175 and D177 each coordinate Zn(2+). Residues D182, G183, R185, and T187 each coordinate Ca(2+). Position 190 (H190) interacts with Zn(2+). The Ca(2+) site is built by E196, G197, G199, and D201. Position 203 (H203) interacts with Zn(2+). Ca(2+) contacts are provided by D205 and E208. H225 is a binding site for Zn(2+). E226 is an active-site residue. The Zn(2+) site is built by H229 and H235. Hemopexin repeat units lie at residues 292–342 (PDLC…FPQL), 343–388 (MSNV…GFPR), 390–438 (VQRI…FSGV), and 439–482 (SGHI…WIGC). The cysteines at positions 295 and 482 are disulfide-linked.

The protein belongs to the peptidase M10A family. Zn(2+) serves as cofactor. Requires Ca(2+) as cofactor. Post-translationally, autoactivates at least at the 106-Asn-|-Tyr-107 site. Expressed in the enamel organ.

The protein localises to the secreted. Its subcellular location is the extracellular space. It is found in the extracellular matrix. Functionally, degrades amelogenin, the major protein component of the enamel matrix and two of the macromolecules characterizing the cartilage extracellular matrix: aggrecan and the cartilage oligomeric matrix protein (COMP). May play a central role in tooth enamel formation. Cleaves aggrecan at the '360-Asn-|-Phe-361' site. The sequence is that of Matrix metalloproteinase-20 (Mmp20) from Mus musculus (Mouse).